We begin with the raw amino-acid sequence, 95 residues long: MTLKTADVEYIAHLARLAIDSEAIPHYKHDLSRILEFVGQMNKVDTTNIEPMAHPLDAIQRLRPDEVTESDQWRTFQSIAPQVEAGVYLIPKVID.

It belongs to the GatC family. In terms of assembly, heterotrimer of A, B and C subunits.

It catalyses the reaction L-glutamyl-tRNA(Gln) + L-glutamine + ATP + H2O = L-glutaminyl-tRNA(Gln) + L-glutamate + ADP + phosphate + H(+). It carries out the reaction L-aspartyl-tRNA(Asn) + L-glutamine + ATP + H2O = L-asparaginyl-tRNA(Asn) + L-glutamate + ADP + phosphate + 2 H(+). In terms of biological role, allows the formation of correctly charged Asn-tRNA(Asn) or Gln-tRNA(Gln) through the transamidation of misacylated Asp-tRNA(Asn) or Glu-tRNA(Gln) in organisms which lack either or both of asparaginyl-tRNA or glutaminyl-tRNA synthetases. The reaction takes place in the presence of glutamine and ATP through an activated phospho-Asp-tRNA(Asn) or phospho-Glu-tRNA(Gln). In Nitrosococcus oceani (strain ATCC 19707 / BCRC 17464 / JCM 30415 / NCIMB 11848 / C-107), this protein is Aspartyl/glutamyl-tRNA(Asn/Gln) amidotransferase subunit C.